Reading from the N-terminus, the 807-residue chain is Nucleolar complex protein 3 homolog (807 aa).

Disordered regions lie at residues 27–93 (KLKN…DMMD) and 167–191 (EKPV…EVIE). The segment covering 40–51 (KKYRKEQRKLRQ) has biased composition (basic residues). Over residues 52 to 78 (AVKDAVSKKPIPLEDPKSKRPVKRMER) the composition is skewed to basic and acidic residues. Acidic residues-rich tracts occupy residues 79–93 (EEDE…DMMD) and 174–190 (QQEE…EEVI). K332 is covalently cross-linked (Glycyl lysine isopeptide (Lys-Gly) (interchain with G-Cter in SUMO2)). A coiled-coil region spans residues 449–489 (FKEKRKTLSRMQRKWKKAEEKLERELREAEASESTEKKLKL).

Belongs to the CBF/MAK21 family.

It is found in the nucleus. Its subcellular location is the nucleolus. It localises to the nucleus speckle. In terms of biological role, may be required for adipogenesis. In Mus musculus (Mouse), this protein is Nucleolar complex protein 3 homolog (Noc3l).